The chain runs to 150 residues: Endoribonuclease YbeY (150 aa).

Zn(2+) contacts are provided by histidine 116, histidine 120, and histidine 126.

Belongs to the endoribonuclease YbeY family. It depends on Zn(2+) as a cofactor.

Its subcellular location is the cytoplasm. Functionally, single strand-specific metallo-endoribonuclease involved in late-stage 70S ribosome quality control and in maturation of the 3' terminus of the 16S rRNA. This Mesomycoplasma hyopneumoniae (strain 232) (Mycoplasma hyopneumoniae) protein is Endoribonuclease YbeY.